The primary structure comprises 443 residues: ATP-dependent protease ATPase subunit HslU (443 aa).

ATP is bound by residues isoleucine 18 and 60–65; that span reads GVGKTE. The interval 137-156 is disordered; that stretch reads PPPRDAWGQNEQSEDTSNTR. The span at 145–156 shows a compositional bias: polar residues; sequence QNEQSEDTSNTR. Aspartate 256, glutamate 321, and arginine 393 together coordinate ATP.

Belongs to the ClpX chaperone family. HslU subfamily. In terms of assembly, a double ring-shaped homohexamer of HslV is capped on each side by a ring-shaped HslU homohexamer. The assembly of the HslU/HslV complex is dependent on binding of ATP.

The protein localises to the cytoplasm. In terms of biological role, ATPase subunit of a proteasome-like degradation complex; this subunit has chaperone activity. The binding of ATP and its subsequent hydrolysis by HslU are essential for unfolding of protein substrates subsequently hydrolyzed by HslV. HslU recognizes the N-terminal part of its protein substrates and unfolds these before they are guided to HslV for hydrolysis. This chain is ATP-dependent protease ATPase subunit HslU, found in Vibrio vulnificus (strain YJ016).